The chain runs to 147 residues: Ubiquitin-conjugating enzyme E2-16 kDa (147 aa).

The UBC core domain occupies 1-147; sequence MALKRINKEL…AREWTRKYAI (147 aa). C107 serves as the catalytic Glycyl thioester intermediate.

Belongs to the ubiquitin-conjugating enzyme family.

It catalyses the reaction S-ubiquitinyl-[E1 ubiquitin-activating enzyme]-L-cysteine + [E2 ubiquitin-conjugating enzyme]-L-cysteine = [E1 ubiquitin-activating enzyme]-L-cysteine + S-ubiquitinyl-[E2 ubiquitin-conjugating enzyme]-L-cysteine.. The protein operates within protein modification; protein ubiquitination. Catalyzes the covalent attachment of ubiquitin to other proteins. In Pyricularia oryzae (strain 70-15 / ATCC MYA-4617 / FGSC 8958) (Rice blast fungus), this protein is Ubiquitin-conjugating enzyme E2-16 kDa (UBC1).